The sequence spans 172 residues: Adenine phosphoribosyltransferase (172 aa).

This sequence belongs to the purine/pyrimidine phosphoribosyltransferase family. As to quaternary structure, homodimer.

Its subcellular location is the cytoplasm. It catalyses the reaction AMP + diphosphate = 5-phospho-alpha-D-ribose 1-diphosphate + adenine. It functions in the pathway purine metabolism; AMP biosynthesis via salvage pathway; AMP from adenine: step 1/1. Its function is as follows. Catalyzes a salvage reaction resulting in the formation of AMP, that is energically less costly than de novo synthesis. This Prochlorococcus marinus (strain MIT 9313) protein is Adenine phosphoribosyltransferase.